The primary structure comprises 394 residues: tRNA-specific adenosine deaminase 1 (394 aa).

An A to I editase domain is found at 54–388 (SLGCGTKCIG…TKKPHELLDF (335 aa)). Residue His78 participates in Zn(2+) binding. The active-site Proton donor is the Glu80. 1D-myo-inositol hexakisphosphate contacts are provided by Arg84 and Arg85. Cys127 and Cys191 together coordinate Zn(2+). 1D-myo-inositol hexakisphosphate is bound by residues Lys194, Arg197, Lys320, Lys357, and Lys381.

The protein belongs to the ADAT1 family. 1D-myo-inositol hexakisphosphate serves as cofactor. Widely expressed in early embryos, and later concentrates in the central nervous system.

The enzyme catalyses adenosine(37) in tRNA(Ala) + H2O + H(+) = inosine(37) in tRNA(Ala) + NH4(+). Its function is as follows. Specifically deaminates adenosine-37 to inosine in tRNA-Ala. The protein is tRNA-specific adenosine deaminase 1 of Drosophila melanogaster (Fruit fly).